Here is a 135-residue protein sequence, read N- to C-terminus: Cilia- and flagella-associated protein 144 (135 aa).

The interval Gln-76 to Ile-100 is disordered.

It belongs to the CFAP144 family. As to quaternary structure, microtubule inner protein component of sperm flagellar doublet microtubules. Predominantly expressed in tissues containing motile cilia.

The protein localises to the cytoplasm. It localises to the cytoskeleton. Its subcellular location is the cilium axoneme. The protein resides in the flagellum axoneme. This is Cilia- and flagella-associated protein 144 from Mus musculus (Mouse).